The chain runs to 448 residues: UDP-N-acetylmuramoylalanine--D-glutamate ligase (448 aa).

Residue 116-122 (GSNAKST) coordinates ATP.

It belongs to the MurCDEF family.

Its subcellular location is the cytoplasm. It catalyses the reaction UDP-N-acetyl-alpha-D-muramoyl-L-alanine + D-glutamate + ATP = UDP-N-acetyl-alpha-D-muramoyl-L-alanyl-D-glutamate + ADP + phosphate + H(+). It functions in the pathway cell wall biogenesis; peptidoglycan biosynthesis. Cell wall formation. Catalyzes the addition of glutamate to the nucleotide precursor UDP-N-acetylmuramoyl-L-alanine (UMA). The sequence is that of UDP-N-acetylmuramoylalanine--D-glutamate ligase from Pseudomonas fluorescens (strain Pf0-1).